Here is a 538-residue protein sequence, read N- to C-terminus: NADH-quinone oxidoreductase subunit N (538 aa).

14 helical membrane-spanning segments follow: residues 28–48, 57–77, 94–114, 147–167, 170–190, 206–226, 249–269, 288–308, 315–335, 343–363, 380–400, 424–444, 458–478, and 503–523; these read LAPV…EAFV, QIIV…TTIA, PTLA…VLFA, HTEV…FAAA, LIMM…LCGM, FLLG…LYGC, IVAG…AVPF, MAVA…YVGL, WQIV…IVGL, LLAY…VGAW, VLVY…LILM, IGVL…TAGF, GYAW…AFYL, and IAGW…GVAP.

This sequence belongs to the complex I subunit 2 family. In terms of assembly, NDH-1 is composed of 14 different subunits. Subunits NuoA, H, J, K, L, M, N constitute the membrane sector of the complex.

Its subcellular location is the cell membrane. The enzyme catalyses a quinone + NADH + 5 H(+)(in) = a quinol + NAD(+) + 4 H(+)(out). Its function is as follows. NDH-1 shuttles electrons from NADH, via FMN and iron-sulfur (Fe-S) centers, to quinones in the respiratory chain. The immediate electron acceptor for the enzyme in this species is believed to be a menaquinone. Couples the redox reaction to proton translocation (for every two electrons transferred, four hydrogen ions are translocated across the cytoplasmic membrane), and thus conserves the redox energy in a proton gradient. The sequence is that of NADH-quinone oxidoreductase subunit N from Cutibacterium acnes (strain DSM 16379 / KPA171202) (Propionibacterium acnes).